Here is a 764-residue protein sequence, read N- to C-terminus: MIRSLRAVSRLGARGFSSFAAARQENTTVGTTYQEELDVVNQLKGSVTADDVTRLARMRNIGISAHIDSGKTTFSERILFYTGRTKEIHEVRGKDGVGAKMDHMDLEREKGITIQSAATYATWIKENQDYHFNVIDTPGHIDFTIEVERALRVLDGAVLVVCAVSGVQSQTMTVDRQMRRYNVPRVTFINKMDRMGADPWKAIDQINAKLKTRAAAIQVPIGSEGDLAGVVDIVKEVAYYNDGASGETIRVAEIPEDLKELVAEKRDLLIQTLADVDDEIAECYILEETPTEEQLRGAIRRATIARTFTPVLMGSALANRGVQPVLDAICEYLPDPSDVVNTALDIKKDETPVHLTPAAKAPFVGLAFKLEDGKYGQLTYLRVYQGQLKKGMSIINAKTGKKTKLARLVRMHSDEMEDVDSVGAGEICATFGVDCASGDTFTDGEVTYSMSSMFVPDPVISLAITPKDKGSLTNFSKAMNRFQKEDPTFRVHFDAESKETIISGMGELHLEIYVERMKREYNVVCETGKPQVAYRETITTAAPLDFTHKRQSGGAGQYARIIGEMSPVTDMNAVNEGKATFAAENIFKSEIVGGKIPEKFILACDRSFHETAEKGPLTGSRVLGVEMLINDGNTHVVDSSELAFKVATQRGFYETFMQCSPVILEPIMTVTLTAPVEFQGALIALMNKNQALISDQDIGSEEVTLSGECSLNQMFGFATHLRACTQGKGEFSLEFSHYAPCSPHLQKELVDAHQKKLQAERDGK.

Residues 1-23 (MIRSLRAVSRLGARGFSSFAAAR) constitute a mitochondrion transit peptide. Residues 56 to 337 (ARMRNIGISA…AICEYLPDPS (282 aa)) form the tr-type G domain. Residues 65 to 72 (AHIDSGKT), 136 to 140 (DTPGH), and 190 to 193 (NKMD) contribute to the GTP site.

This sequence belongs to the TRAFAC class translation factor GTPase superfamily. Classic translation factor GTPase family. EF-G/EF-2 subfamily.

It localises to the mitochondrion. Its pathway is protein biosynthesis; polypeptide chain elongation. Mitochondrial GTPase that catalyzes the GTP-dependent ribosomal translocation step during translation elongation. During this step, the ribosome changes from the pre-translocational (PRE) to the post-translocational (POST) state as the newly formed A-site-bound peptidyl-tRNA and P-site-bound deacylated tRNA move to the P and E sites, respectively. Catalyzes the coordinated movement of the two tRNA molecules, the mRNA and conformational changes in the ribosome. The chain is Elongation factor G, mitochondrial from Yarrowia lipolytica (strain CLIB 122 / E 150) (Yeast).